The primary structure comprises 463 residues: Bifunctional protein GlmU (463 aa).

The tract at residues 1–233 (MSKKSTFIIL…NFEVMGINSR (233 aa)) is pyrophosphorylase. UDP-N-acetyl-alpha-D-glucosamine-binding positions include 10–13 (LAAG), lysine 24, glutamine 76, 81–82 (GT), 104–106 (YGD), glycine 143, glutamate 158, asparagine 173, and asparagine 231. Position 106 (aspartate 106) interacts with Mg(2+). Asparagine 231 serves as a coordination point for Mg(2+). A linker region spans residues 234–254 (YELFVAEQELKLRINKEHLSK). Residues 255-463 (GVQIIDIYST…LRRKQMYENR (209 aa)) are N-acetyltransferase. UDP-N-acetyl-alpha-D-glucosamine-binding residues include arginine 336 and lysine 354. The active-site Proton acceptor is histidine 366. Tyrosine 369 and asparagine 380 together coordinate UDP-N-acetyl-alpha-D-glucosamine. Acetyl-CoA contacts are provided by residues 389-390 (NY), alanine 426, and arginine 443.

It in the N-terminal section; belongs to the N-acetylglucosamine-1-phosphate uridyltransferase family. This sequence in the C-terminal section; belongs to the transferase hexapeptide repeat family. In terms of assembly, homotrimer. It depends on Mg(2+) as a cofactor.

It localises to the cytoplasm. The catalysed reaction is alpha-D-glucosamine 1-phosphate + acetyl-CoA = N-acetyl-alpha-D-glucosamine 1-phosphate + CoA + H(+). It carries out the reaction N-acetyl-alpha-D-glucosamine 1-phosphate + UTP + H(+) = UDP-N-acetyl-alpha-D-glucosamine + diphosphate. Its pathway is nucleotide-sugar biosynthesis; UDP-N-acetyl-alpha-D-glucosamine biosynthesis; N-acetyl-alpha-D-glucosamine 1-phosphate from alpha-D-glucosamine 6-phosphate (route II): step 2/2. It participates in nucleotide-sugar biosynthesis; UDP-N-acetyl-alpha-D-glucosamine biosynthesis; UDP-N-acetyl-alpha-D-glucosamine from N-acetyl-alpha-D-glucosamine 1-phosphate: step 1/1. It functions in the pathway bacterial outer membrane biogenesis; LPS lipid A biosynthesis. Its function is as follows. Catalyzes the last two sequential reactions in the de novo biosynthetic pathway for UDP-N-acetylglucosamine (UDP-GlcNAc). The C-terminal domain catalyzes the transfer of acetyl group from acetyl coenzyme A to glucosamine-1-phosphate (GlcN-1-P) to produce N-acetylglucosamine-1-phosphate (GlcNAc-1-P), which is converted into UDP-GlcNAc by the transfer of uridine 5-monophosphate (from uridine 5-triphosphate), a reaction catalyzed by the N-terminal domain. In Caldicellulosiruptor saccharolyticus (strain ATCC 43494 / DSM 8903 / Tp8T 6331), this protein is Bifunctional protein GlmU.